We begin with the raw amino-acid sequence, 57 residues long: UPF0057 membrane protein T23F2.5 (57 aa).

2 helical membrane-spanning segments follow: residues 3-23 (LTCT…IGVW) and 36-56 (ILLT…VILA).

The protein belongs to the UPF0057 (PMP3) family.

The protein resides in the membrane. This chain is UPF0057 membrane protein T23F2.5, found in Caenorhabditis elegans.